A 436-amino-acid chain; its full sequence is 3-ketoacyl-CoA thiolase (436 aa).

Cysteine 99 serves as the catalytic Acyl-thioester intermediate. Residues histidine 392 and cysteine 422 each act as proton acceptor in the active site.

This sequence belongs to the thiolase-like superfamily. Thiolase family. In terms of assembly, heterotetramer of two alpha chains (FadJ) and two beta chains (FadI).

The protein resides in the cytoplasm. The catalysed reaction is an acyl-CoA + acetyl-CoA = a 3-oxoacyl-CoA + CoA. It participates in lipid metabolism; fatty acid beta-oxidation. Functionally, catalyzes the final step of fatty acid oxidation in which acetyl-CoA is released and the CoA ester of a fatty acid two carbons shorter is formed. In Shewanella sp. (strain W3-18-1), this protein is 3-ketoacyl-CoA thiolase.